The following is a 258-amino-acid chain: Acetylglutamate kinase (258 aa).

Substrate is bound by residues 41–42 (GG), Arg63, and Asn156.

The protein belongs to the acetylglutamate kinase family. ArgB subfamily.

It is found in the cytoplasm. It catalyses the reaction N-acetyl-L-glutamate + ATP = N-acetyl-L-glutamyl 5-phosphate + ADP. It functions in the pathway amino-acid biosynthesis; L-arginine biosynthesis; N(2)-acetyl-L-ornithine from L-glutamate: step 2/4. Catalyzes the ATP-dependent phosphorylation of N-acetyl-L-glutamate. The chain is Acetylglutamate kinase from Geobacillus thermodenitrificans (strain NG80-2).